Reading from the N-terminus, the 437-residue chain is Adenylosuccinate synthetase (437 aa).

GTP is bound by residues 12–18 (GDEGKGK) and 40–42 (GHT). The active-site Proton acceptor is the aspartate 13. Residues aspartate 13 and glycine 40 each contribute to the Mg(2+) site. Residues 13–16 (DEGK), 38–41 (NAGH), threonine 131, arginine 145, glutamine 226, threonine 241, and arginine 305 contribute to the IMP site. Residue histidine 41 is the Proton donor of the active site. 301 to 307 (ATTGRRR) contributes to the substrate binding site. Residues arginine 307, 333–335 (KLD), and 415–417 (SVG) contribute to the GTP site.

This sequence belongs to the adenylosuccinate synthetase family. As to quaternary structure, homodimer. The cofactor is Mg(2+).

Its subcellular location is the cytoplasm. It carries out the reaction IMP + L-aspartate + GTP = N(6)-(1,2-dicarboxyethyl)-AMP + GDP + phosphate + 2 H(+). It participates in purine metabolism; AMP biosynthesis via de novo pathway; AMP from IMP: step 1/2. In terms of biological role, plays an important role in the de novo pathway of purine nucleotide biosynthesis. Catalyzes the first committed step in the biosynthesis of AMP from IMP. In Desulfotalea psychrophila (strain LSv54 / DSM 12343), this protein is Adenylosuccinate synthetase.